Reading from the N-terminus, the 713-residue chain is Phosphoribosylformylglycinamidine synthase subunit PurL (713 aa).

Residues 1–17 show a composition bias toward basic and acidic residues; that stretch reads MSLSPSDRELVTEELGR. The segment at 1-20 is disordered; sequence MSLSPSDRELVTEELGREPT. Histidine 34 is a catalytic residue. Tyrosine 37 is an ATP binding site. Mg(2+) is bound at residue glutamate 85. Residues 86 to 89 and arginine 108 contribute to the substrate site; that span reads SHNH. The active-site Proton acceptor is histidine 87. A Mg(2+)-binding site is contributed by aspartate 109. Residue glutamine 233 coordinates substrate. A Mg(2+)-binding site is contributed by aspartate 261. 305–307 contributes to the substrate binding site; sequence ESQ. Positions 480 and 517 each coordinate ATP. Residue asparagine 518 coordinates Mg(2+). Serine 520 contributes to the substrate binding site.

This sequence belongs to the FGAMS family. In terms of assembly, monomer. Part of the FGAM synthase complex composed of 1 PurL, 1 PurQ and 2 PurS subunits.

Its subcellular location is the cytoplasm. The catalysed reaction is N(2)-formyl-N(1)-(5-phospho-beta-D-ribosyl)glycinamide + L-glutamine + ATP + H2O = 2-formamido-N(1)-(5-O-phospho-beta-D-ribosyl)acetamidine + L-glutamate + ADP + phosphate + H(+). Its pathway is purine metabolism; IMP biosynthesis via de novo pathway; 5-amino-1-(5-phospho-D-ribosyl)imidazole from N(2)-formyl-N(1)-(5-phospho-D-ribosyl)glycinamide: step 1/2. Its function is as follows. Part of the phosphoribosylformylglycinamidine synthase complex involved in the purines biosynthetic pathway. Catalyzes the ATP-dependent conversion of formylglycinamide ribonucleotide (FGAR) and glutamine to yield formylglycinamidine ribonucleotide (FGAM) and glutamate. The FGAM synthase complex is composed of three subunits. PurQ produces an ammonia molecule by converting glutamine to glutamate. PurL transfers the ammonia molecule to FGAR to form FGAM in an ATP-dependent manner. PurS interacts with PurQ and PurL and is thought to assist in the transfer of the ammonia molecule from PurQ to PurL. In Natronomonas pharaonis (strain ATCC 35678 / DSM 2160 / CIP 103997 / JCM 8858 / NBRC 14720 / NCIMB 2260 / Gabara) (Halobacterium pharaonis), this protein is Phosphoribosylformylglycinamidine synthase subunit PurL.